The chain runs to 272 residues: Undecaprenyl-diphosphatase (272 aa).

Helical transmembrane passes span 22–42, 45–65, 92–112, 118–138, 189–209, 228–248, and 251–271; these read FLPVSSTGHMIIVGHMLGFTG, AETFEVIIQLGSILAVVVVFW, SHIILAMLPAVTLGLMFHDVI, PQSVMYALVIGGVLLITAEIL, YTASEFSFILAVPMMMGASGL, VGFVTAFVVALVAIKTFLALI, and ISFIPFAIYRFIVAAAVYWVF.

The protein belongs to the UppP family.

It is found in the cell inner membrane. The enzyme catalyses di-trans,octa-cis-undecaprenyl diphosphate + H2O = di-trans,octa-cis-undecaprenyl phosphate + phosphate + H(+). Its function is as follows. Catalyzes the dephosphorylation of undecaprenyl diphosphate (UPP). Confers resistance to bacitracin. The chain is Undecaprenyl-diphosphatase from Photorhabdus laumondii subsp. laumondii (strain DSM 15139 / CIP 105565 / TT01) (Photorhabdus luminescens subsp. laumondii).